The following is a 410-amino-acid chain: Arginine biosynthesis bifunctional protein ArgJ (410 aa).

T158, K184, T195, E282, N405, and T410 together coordinate substrate. The active-site Nucleophile is the T195.

The protein belongs to the ArgJ family. As to quaternary structure, heterotetramer of two alpha and two beta chains.

The protein resides in the cytoplasm. The catalysed reaction is N(2)-acetyl-L-ornithine + L-glutamate = N-acetyl-L-glutamate + L-ornithine. It carries out the reaction L-glutamate + acetyl-CoA = N-acetyl-L-glutamate + CoA + H(+). Its pathway is amino-acid biosynthesis; L-arginine biosynthesis; L-ornithine and N-acetyl-L-glutamate from L-glutamate and N(2)-acetyl-L-ornithine (cyclic): step 1/1. It functions in the pathway amino-acid biosynthesis; L-arginine biosynthesis; N(2)-acetyl-L-ornithine from L-glutamate: step 1/4. Catalyzes two activities which are involved in the cyclic version of arginine biosynthesis: the synthesis of N-acetylglutamate from glutamate and acetyl-CoA as the acetyl donor, and of ornithine by transacetylation between N(2)-acetylornithine and glutamate. In Rhodopirellula baltica (strain DSM 10527 / NCIMB 13988 / SH1), this protein is Arginine biosynthesis bifunctional protein ArgJ.